The primary structure comprises 529 residues: Ectonucleoside triphosphate diphosphohydrolase 3 (529 aa).

At 1-22 (MFTVLTRQPCEQAGLKALYRTP) the chain is on the cytoplasmic side. Residues 23 to 43 (TIIALVVLLVSIVVLVSITVI) form a helical membrane-spanning segment. The Extracellular segment spans residues 44-485 (QIHKQEVLPP…PLIRLPIEPP (442 aa)). The N-linked (GlcNAc...) asparagine glycan is linked to Asn-81. Cys-92 and Cys-116 form a disulfide bridge. An N-linked (GlcNAc...) asparagine glycan is attached at Asn-149. Catalysis depends on Glu-182, which acts as the Proton acceptor. ATP is bound at residue 222-226 (GASTQ). A glycan (N-linked (GlcNAc...) asparagine) is linked at Asn-238. 3 disulfide bridges follow: Cys-261–Cys-308, Cys-289–Cys-334, and Cys-347–Cys-353. N-linked (GlcNAc...) asparagine glycans are attached at residues Asn-381, Asn-392, Asn-402, and Asn-454. Cys-399 and Cys-422 are oxidised to a cystine. The chain crosses the membrane as a helical span at residues 486-506 (VFVGTLAFFTAAALLCLAFLA). Over 507 to 529 (YLCSATRRKRHSEHAFDHAVDSD) the chain is Cytoplasmic.

The protein belongs to the GDA1/CD39 NTPase family. Ca(2+) is required as a cofactor. The cofactor is Mg(2+). In terms of tissue distribution, expressed in adult brain, pancreas, spleen and prostate. Moderate or low expression is seen in most tissues. Not expressed in liver and peripheral blood leukocytes.

The protein localises to the cell membrane. The enzyme catalyses a ribonucleoside 5'-triphosphate + 2 H2O = a ribonucleoside 5'-phosphate + 2 phosphate + 2 H(+). Has a threefold preference for the hydrolysis of ATP over ADP. The protein is Ectonucleoside triphosphate diphosphohydrolase 3 (ENTPD3) of Homo sapiens (Human).